Consider the following 100-residue polypeptide: Urease subunit gamma (100 aa).

This sequence belongs to the urease gamma subunit family. Heterotrimer of UreA (gamma), UreB (beta) and UreC (alpha) subunits. Three heterotrimers associate to form the active enzyme. The apoenzyme interacts with an accessory complex composed of UreD, UreF and UreG, which is required for the assembly of the nickel containing metallocenter of UreC. The UreE protein may also play a direct role as a metallochaperone in nickel transfer to the urease apoprotein.

It is found in the cytoplasm. The catalysed reaction is urea + 2 H2O + H(+) = hydrogencarbonate + 2 NH4(+). It functions in the pathway nitrogen metabolism; urea degradation; CO(2) and NH(3) from urea (urease route): step 1/1. The apoenzyme can be activated in vitro in the presence of nickel ions and carbon dioxide, which promotes carbamylation of 'Lys-217' of the UreC (alpha) subunit. The sequence is that of Urease subunit gamma from Klebsiella aerogenes (Enterobacter aerogenes).